We begin with the raw amino-acid sequence, 294 residues long: Tetraspanin-15 (294 aa).

Residues 1–23 (MPRGDSEQVRYCARFSYLWLKFS) are Cytoplasmic-facing. A helical membrane pass occupies residues 24–44 (LIIYSTVFWLIGALVLSVGIY). The Extracellular segment spans residues 45-62 (AEVERQKYKTLESAFLAP). The helical transmembrane segment at 63–83 (AIILILLGVVMFMVSFIGVLA) threads the bilayer. Residues 84–93 (SLRDNLYLLQ) are Cytoplasmic-facing. Residues 94 to 114 (AFMYILGICLIMELIGGVVAL) traverse the membrane as a helical segment. At 115-235 (TFRNQTIDFL…WFMDNYTIMA (121 aa)) the chain is on the extracellular side. N-linked (GlcNAc...) asparagine glycosylation occurs at Asn118. Disulfide bonds link Cys154/Cys219, Cys155/Cys185, Cys171/Cys179, and Cys186/Cys198. N-linked (GlcNAc...) asparagine glycans are attached at residues Asn189 and Asn230. Residues 236–256 (GILLGILLPQFLGVLLTLLYI) traverse the membrane as a helical segment. The Cytoplasmic segment spans residues 257–294 (TRVEDIIMEHSVTDGLLGPGAKPSVEAAGTGCCLCYPN).

It belongs to the tetraspanin (TM4SF) family. As to quaternary structure, interacts with ADAM10; the interaction influences ADAM10 substrate specificity, endocytosis and turnover. Post-translationally, palmitoylated.

Its subcellular location is the cell membrane. It localises to the late endosome membrane. In terms of biological role, part of TspanC8 subgroup, composed of 6 members that interact with the transmembrane metalloprotease ADAM10. This interaction is required for ADAM10 exit from the endoplasmic reticulum and for enzymatic maturation and trafficking to the cell surface as well as substrate specificity. Different TspanC8/ADAM10 complexes have distinct substrates. Promotes ADAM10-mediated cleavage of CDH2. Negatively regulates ligand-induced Notch activity probably by regulating ADAM10 activity. The protein is Tetraspanin-15 of Homo sapiens (Human).